The chain runs to 214 residues: CASP-like protein 0U1 (214 aa).

Over 1 to 82 the chain is Cytoplasmic; the sequence is MATSEAPLLK…GFTSFYQFKG (82 aa). A helical membrane pass occupies residues 83–103; that stretch reads VVGVYAAFWVYTVLLIGLYLF. The Extracellular segment spans residues 104–112; it reads SRGPPPGTE. Residues 113-133 traverse the membrane as a helical segment; it reads FVVHALFTLCMIAFVSLSVIS. At 134 to 153 the chain is on the cytoplasmic side; it reads CTSTVIESDYSVCKNAAYAK. The chain crosses the membrane as a helical span at residues 154–174; that stretch reads ASLVFAALVVVLNCATCAFVF. The Extracellular segment spans residues 175–214; sequence KQWRSLQFVGMPENFRPFGRHRHKHGHHAGDADDAIPTHP. Residues 194-214 are disordered; the sequence is RHRHKHGHHAGDADDAIPTHP.

It belongs to the Casparian strip membrane proteins (CASP) family. Homodimer and heterodimers.

It localises to the cell membrane. In Ostreococcus tauri, this protein is CASP-like protein 0U1.